The chain runs to 190 residues: Cancer-related nucleoside-triphosphatase homolog (190 aa).

Residues 9–16 and 109–116 contribute to the ATP site; these read GPPGVGKT and VCIIDEIG. Residue K165 is modified to N6-acetyllysine.

The protein belongs to the THEP1 NTPase family. As to quaternary structure, monomer.

The catalysed reaction is a ribonucleoside 5'-triphosphate + H2O = a ribonucleoside 5'-diphosphate + phosphate + H(+). It catalyses the reaction 5-methyl-UTP + H2O = 5-methyl-UDP + phosphate + H(+). The enzyme catalyses CTP + H2O = CDP + phosphate + H(+). It carries out the reaction ATP + H2O = ADP + phosphate + H(+). The catalysed reaction is GTP + H2O = GDP + phosphate + H(+). Has nucleotide phosphatase activity towards ATP, GTP, CTP, TTP and UTP. Hydrolyzes nucleoside diphosphates with lower efficiency. The polypeptide is Cancer-related nucleoside-triphosphatase homolog (Mus musculus (Mouse)).